The chain runs to 421 residues: Pyridinium-3,5-bisthiocarboxylic acid mononucleotide nickel insertion protein (421 aa).

The protein belongs to the LarC family.

It carries out the reaction Ni(II)-pyridinium-3,5-bisthiocarboxylate mononucleotide = pyridinium-3,5-bisthiocarboxylate mononucleotide + Ni(2+). Functionally, involved in the biosynthesis of a nickel-pincer cofactor ((SCS)Ni(II) pincer complex). Binds Ni(2+), and functions in nickel delivery to pyridinium-3,5-bisthiocarboxylic acid mononucleotide (P2TMN), to form the mature cofactor. Is thus probably required for the activation of nickel-pincer cofactor-dependent enzymes. The chain is Pyridinium-3,5-bisthiocarboxylic acid mononucleotide nickel insertion protein from Alkaliphilus metalliredigens (strain QYMF).